Consider the following 155-residue polypeptide: MPAVLDTPVAIRRTAMDLLARREHGRVELTRKLRQRGAPPELIEAALDRLVEEGLLSESRYLESFVSYRARSGYGPARIREELNQRGLQRADVERALKECGVNWQEKLQEVWQRKFAGELPVDARERARQGRFLSYRGYPLDMIGRLLSGRGGDD.

This sequence belongs to the RecX family.

The protein resides in the cytoplasm. Modulates RecA activity. The chain is Regulatory protein RecX from Pseudomonas syringae pv. tomato (strain ATCC BAA-871 / DC3000).